Reading from the N-terminus, the 560-residue chain is Eukaryotic translation initiation factor 3 subunit D-1 (560 aa).

The segment at 98–166 (VQKPPHQRGR…RGPPPKMRES (69 aa)) is disordered. Residues 100-121 (KPPHQRGRFRNMRNSRSGRGRN) are compositionally biased toward basic residues. Residue Thr-128 is modified to Phosphothreonine. The span at 147 to 156 (GRGMGKKFGH) shows a compositional bias: basic residues. The segment at 291 to 305 (EFDLLTVNESSVEPP) is RNA gate.

It belongs to the eIF-3 subunit D family. In terms of assembly, component of the eukaryotic translation initiation factor 3 (eIF-3) complex. The eIF-3 complex interacts with pix.

It is found in the cytoplasm. In terms of biological role, mRNA cap-binding component of the eukaryotic translation initiation factor 3 (eIF-3) complex, which is involved in protein synthesis of a specialized repertoire of mRNAs and, together with other initiation factors, stimulates binding of mRNA and methionyl-tRNAi to the 40S ribosome. The eIF-3 complex specifically targets and initiates translation of a subset of mRNAs involved in cell proliferation. In the eIF-3 complex, eif3d specifically recognizes and binds the 7-methylguanosine cap of a subset of mRNAs. This is Eukaryotic translation initiation factor 3 subunit D-1 from Drosophila yakuba (Fruit fly).